The sequence spans 481 residues: Cysteine--tRNA ligase (481 aa).

Cys-43 contacts Zn(2+). Residues 45-55 (ATVQGLPHIGH) carry the 'HIGH' region motif. Positions 221, 246, and 250 each coordinate Zn(2+). Positions 277-281 (KMSKS) match the 'KMSKS' region motif. ATP is bound at residue Lys-280.

This sequence belongs to the class-I aminoacyl-tRNA synthetase family. In terms of assembly, monomer. Zn(2+) is required as a cofactor.

It localises to the cytoplasm. The enzyme catalyses tRNA(Cys) + L-cysteine + ATP = L-cysteinyl-tRNA(Cys) + AMP + diphosphate. This Mycobacterium sp. (strain JLS) protein is Cysteine--tRNA ligase.